The sequence spans 109 residues: Cell division protein ZapA (109 aa).

A coiled-coil region spans residues 21–99 (PEQRDALNQA…IEQALLEQGR (79 aa)).

This sequence belongs to the ZapA family. Type 1 subfamily. Homodimer. Interacts with FtsZ.

The protein resides in the cytoplasm. Functionally, activator of cell division through the inhibition of FtsZ GTPase activity, therefore promoting FtsZ assembly into bundles of protofilaments necessary for the formation of the division Z ring. It is recruited early at mid-cell but it is not essential for cell division. In Klebsiella pneumoniae (strain 342), this protein is Cell division protein ZapA.